Here is a 192-residue protein sequence, read N- to C-terminus: Dihydrofolate reductase (192 aa).

The region spanning 5–191 (NVAIIVAALK…FTYNYTLWTR (187 aa)) is the DHFR domain. Residues Ala-11 and 18–24 (GIGYKGK) each bind NADP(+). Residue 32–37 (EIRYFK) coordinates substrate. 56-58 (RKT) is a binding site for NADP(+). Arg-72 serves as a coordination point for substrate. 78–80 (SRS) is a binding site for NADP(+). Residues Ile-112 and Tyr-118 each contribute to the substrate site. NADP(+) is bound at residue 113-120 (GGAEIYNE).

Belongs to the dihydrofolate reductase family.

The enzyme catalyses (6S)-5,6,7,8-tetrahydrofolate + NADP(+) = 7,8-dihydrofolate + NADPH + H(+). Its pathway is cofactor biosynthesis; tetrahydrofolate biosynthesis; 5,6,7,8-tetrahydrofolate from 7,8-dihydrofolate: step 1/1. In terms of biological role, key enzyme in folate metabolism. Catalyzes an essential reaction for de novo glycine and purine synthesis, and for DNA precursor synthesis. In Candida albicans (Yeast), this protein is Dihydrofolate reductase (DFR1).